The following is a 157-amino-acid chain: Transcriptional regulator MraZ (157 aa).

SpoVT-AbrB domains are found at residues 7 to 52 and 83 to 126; these read TYTM…AGGN and SETL…EPER.

The protein belongs to the MraZ family. In terms of assembly, forms oligomers.

The protein resides in the cytoplasm. Its subcellular location is the nucleoid. In Xanthobacter autotrophicus (strain ATCC BAA-1158 / Py2), this protein is Transcriptional regulator MraZ.